Reading from the N-terminus, the 1108-residue chain is DNA-directed RNA polymerase subunit beta (1108 aa).

It belongs to the RNA polymerase beta chain family. In terms of assembly, in plastids the minimal PEP RNA polymerase catalytic core is composed of four subunits: alpha, beta, beta', and beta''. When a (nuclear-encoded) sigma factor is associated with the core the holoenzyme is formed, which can initiate transcription.

It is found in the plastid. The protein resides in the chloroplast. It carries out the reaction RNA(n) + a ribonucleoside 5'-triphosphate = RNA(n+1) + diphosphate. Functionally, DNA-dependent RNA polymerase catalyzes the transcription of DNA into RNA using the four ribonucleoside triphosphates as substrates. This is DNA-directed RNA polymerase subunit beta from Gnetum parvifolium (Small-leaved jointfir).